A 255-amino-acid polypeptide reads, in one-letter code: tRNA (guanine-N(1)-)-methyltransferase (255 aa).

S-adenosyl-L-methionine contacts are provided by residues Gly-113 and 133–138 (IGDYVL).

This sequence belongs to the RNA methyltransferase TrmD family. In terms of assembly, homodimer.

It is found in the cytoplasm. The catalysed reaction is guanosine(37) in tRNA + S-adenosyl-L-methionine = N(1)-methylguanosine(37) in tRNA + S-adenosyl-L-homocysteine + H(+). In terms of biological role, specifically methylates guanosine-37 in various tRNAs. This chain is tRNA (guanine-N(1)-)-methyltransferase, found in Klebsiella pneumoniae (strain 342).